Consider the following 336-residue polypeptide: tRNA N6-adenosine threonylcarbamoyltransferase (336 aa).

Residues histidine 111 and histidine 115 each contribute to the Fe cation site. Residues 133–137 (LISGG), aspartate 166, glycine 179, and asparagine 276 each bind substrate. Position 301 (aspartate 301) interacts with Fe cation.

This sequence belongs to the KAE1 / TsaD family. The cofactor is Fe(2+).

The protein localises to the cytoplasm. It catalyses the reaction L-threonylcarbamoyladenylate + adenosine(37) in tRNA = N(6)-L-threonylcarbamoyladenosine(37) in tRNA + AMP + H(+). Required for the formation of a threonylcarbamoyl group on adenosine at position 37 (t(6)A37) in tRNAs that read codons beginning with adenine. Is involved in the transfer of the threonylcarbamoyl moiety of threonylcarbamoyl-AMP (TC-AMP) to the N6 group of A37, together with TsaE and TsaB. TsaD likely plays a direct catalytic role in this reaction. The chain is tRNA N6-adenosine threonylcarbamoyltransferase from Wolbachia pipientis subsp. Culex pipiens (strain wPip).